A 181-amino-acid chain; its full sequence is Bifunctional protein PyrR (181 aa).

Substrate contacts are provided by residues 41 to 42, Arg-82, Arg-86, 103 to 111, Arg-136, and Val-160; these read TR and DDVLYTGRT. The PRPP-binding motif lies at 99-111; sequence IVLVDDVLYTGRT.

The protein belongs to the purine/pyrimidine phosphoribosyltransferase family. PyrR subfamily.

It catalyses the reaction UMP + diphosphate = 5-phospho-alpha-D-ribose 1-diphosphate + uracil. Probably regulates transcriptional attenuation of the pyrimidine nucleotide (pyr) operon in response to exogenous pyrimidines. In contrast to pyr attenuation in Bacillus, PyrR from Thermus could act as a translational repressor: the binding of PyrR at its proposed recognition site in the transcript would prevent initiation of translation of the leader peptide, resulting in terminator formation and reduced expression of downstream genes. Also displays uracil phosphoribosyltransferase activity. This Thermus thermophilus (strain ATCC BAA-163 / DSM 7039 / HB27) protein is Bifunctional protein PyrR (pyrR).